We begin with the raw amino-acid sequence, 928 residues long: Type II inositol 3,4-bisphosphate 4-phosphatase (928 aa).

Residues 1 to 13 (MEIKEEGTSEEGQ) show a composition bias toward basic and acidic residues. Disordered stretches follow at residues 1-23 (MEIK…QAND), 481-516 (ILRK…HHSD), and 548-575 (SRND…LTSH). The C2 domain maps to 23–165 (DPEDIQFTSI…LKSKEQLLSL (143 aa)). Composition is skewed to basic and acidic residues over residues 506–516 (RRQDSIPHHSD) and 548–563 (SRND…KDGD).

The protein belongs to the inositol 3,4-bisphosphate 4-phosphatase family.

It catalyses the reaction a 1,2-diacyl-sn-glycero-3-phospho-(1D-myo-inositol-3,4-bisphosphate) + H2O = a 1,2-diacyl-sn-glycero-3-phospho-(1D-myo-inositol-3-phosphate) + phosphate. The enzyme catalyses 1D-myo-inositol 3,4-bisphosphate + H2O = 1D-myo-inositol 3-phosphate + phosphate. The catalysed reaction is 1D-myo-inositol 1,3,4-trisphosphate + H2O = 1D-myo-inositol 1,3-bisphosphate + phosphate. The protein operates within signal transduction; phosphatidylinositol signaling pathway. With respect to regulation, strongly inhibited by inositol hexakisphosphate. In terms of biological role, catalyzes the hydrolysis of the 4-position phosphate of phosphatidylinositol 3,4-bisphosphate, inositol 1,3,4-trisphosphate and inositol 3,4-bisphosphate. Plays a role in the late stages of macropinocytosis by dephosphorylating phosphatidylinositol 3,4-bisphosphate in membrane ruffles. The lipid phosphatase activity is critical for tumor suppressor function. Antagonizes the PI3K-AKT/PKB signaling pathway by dephosphorylating phosphoinositides and thereby modulating cell cycle progression and cell survival. This chain is Type II inositol 3,4-bisphosphate 4-phosphatase (Inpp4b), found in Rattus norvegicus (Rat).